We begin with the raw amino-acid sequence, 86 residues long: Large ribosomal subunit protein uL24 (86 aa).

This sequence belongs to the universal ribosomal protein uL24 family. In terms of assembly, part of the 50S ribosomal subunit.

Functionally, one of two assembly initiator proteins, it binds directly to the 5'-end of the 23S rRNA, where it nucleates assembly of the 50S subunit. In terms of biological role, one of the proteins that surrounds the polypeptide exit tunnel on the outside of the subunit. This chain is Large ribosomal subunit protein uL24, found in Bdellovibrio bacteriovorus (strain ATCC 15356 / DSM 50701 / NCIMB 9529 / HD100).